The following is a 316-amino-acid chain: Membrane protein UL148 (316 aa).

The N-terminal stretch at 1–20 is a signal peptide; that stretch reads MLRLLFTLVLLALYGPSVDA. Residues 286-308 traverse the membrane as a helical segment; the sequence is FIVQYLNTLLITMMAAIWARVLI.

As to quaternary structure, interacts with host SEL1L.

The protein resides in the host endoplasmic reticulum membrane. In terms of biological role, chaperone protein that plays an important role in HCMV tropism. Cooperates with UL116 to regulate the abundance of gH-gL complexes in virion. Favors the incorporation of gL into virions once UL116 has regulated the early folding steps of virion assembly. Interacts with the host ERAD machinery and slows gO decay which would otherwise be constitutively degraded. Reorganizes the host endoplasmic reticulum and activates the unfolded protein response. Additionally, plays a role in the evasion of antiviral immune response by down-regulating cell surface expression of host CD58. Mechanistically, interacts with host CD58 and retains its immature form intracellularly. The capacity to cause endoplasmic reticulum reorganization and the intracellular retention of host CD58 are functionally independent properties. The sequence is that of Membrane protein UL148 (UL148) from Human cytomegalovirus (strain Merlin) (HHV-5).